A 112-amino-acid polypeptide reads, in one-letter code: T cell receptor alpha variable 12-1 (112 aa).

Residues 1-20 form the signal peptide; that stretch reads MISLRVLLVILWLQLSWVWS. Positions 23 to 112 constitute an Ig-like domain; sequence KEVEQDPGPF…DSATYLCVVN (90 aa). Asn43 carries N-linked (GlcNAc...) asparagine glycosylation. Cys44 and Cys109 are disulfide-bonded.

In terms of assembly, alpha-beta TR is a heterodimer composed of an alpha and beta chain; disulfide-linked. The alpha-beta TR is associated with the transmembrane signaling CD3 coreceptor proteins to form the TR-CD3 (TcR or TCR). The assembly of alpha-beta TR heterodimers with CD3 occurs in the endoplasmic reticulum where a single alpha-beta TR heterodimer associates with one CD3D-CD3E heterodimer, one CD3G-CD3E heterodimer and one CD247 homodimer forming a stable octameric structure. CD3D-CD3E and CD3G-CD3E heterodimers preferentially associate with TR alpha and TR beta chains, respectively. The association of the CD247 homodimer is the last step of TcR assembly in the endoplasmic reticulum and is required for transport to the cell surface.

It localises to the cell membrane. Its function is as follows. V region of the variable domain of T cell receptor (TR) alpha chain that participates in the antigen recognition. Alpha-beta T cell receptors are antigen specific receptors which are essential to the immune response and are present on the cell surface of T lymphocytes. Recognize peptide-major histocompatibility (MH) (pMH) complexes that are displayed by antigen presenting cells (APC), a prerequisite for efficient T cell adaptive immunity against pathogens. Binding of alpha-beta TR to pMH complex initiates TR-CD3 clustering on the cell surface and intracellular activation of LCK that phosphorylates the ITAM motifs of CD3G, CD3D, CD3E and CD247 enabling the recruitment of ZAP70. In turn ZAP70 phosphorylates LAT, which recruits numerous signaling molecules to form the LAT signalosome. The LAT signalosome propagates signal branching to three major signaling pathways, the calcium, the mitogen-activated protein kinase (MAPK) kinase and the nuclear factor NF-kappa-B (NF-kB) pathways, leading to the mobilization of transcription factors that are critical for gene expression and essential for T cell growth and differentiation. The T cell repertoire is generated in the thymus, by V-(D)-J rearrangement. This repertoire is then shaped by intrathymic selection events to generate a peripheral T cell pool of self-MH restricted, non-autoaggressive T cells. Post-thymic interaction of alpha-beta TR with the pMH complexes shapes TR structural and functional avidity. In Homo sapiens (Human), this protein is T cell receptor alpha variable 12-1.